A 554-amino-acid polypeptide reads, in one-letter code: Exodeoxyribonuclease 7 large subunit (554 aa).

The protein belongs to the XseA family. Heterooligomer composed of large and small subunits.

It localises to the cytoplasm. The catalysed reaction is Exonucleolytic cleavage in either 5'- to 3'- or 3'- to 5'-direction to yield nucleoside 5'-phosphates.. Functionally, bidirectionally degrades single-stranded DNA into large acid-insoluble oligonucleotides, which are then degraded further into small acid-soluble oligonucleotides. This is Exodeoxyribonuclease 7 large subunit from Chlamydia pneumoniae (Chlamydophila pneumoniae).